An 89-amino-acid polypeptide reads, in one-letter code: Small ribosomal subunit protein uS15 (89 aa).

Residues 1–11 (MSITAERKAEV) show a composition bias toward basic and acidic residues. A disordered region spans residues 1-24 (MSITAERKAEVIKTSATKAGDTGS).

The protein belongs to the universal ribosomal protein uS15 family. In terms of assembly, part of the 30S ribosomal subunit. Forms a bridge to the 50S subunit in the 70S ribosome, contacting the 23S rRNA.

One of the primary rRNA binding proteins, it binds directly to 16S rRNA where it helps nucleate assembly of the platform of the 30S subunit by binding and bridging several RNA helices of the 16S rRNA. Its function is as follows. Forms an intersubunit bridge (bridge B4) with the 23S rRNA of the 50S subunit in the ribosome. In Rhodopseudomonas palustris (strain TIE-1), this protein is Small ribosomal subunit protein uS15.